A 366-amino-acid chain; its full sequence is Transmembrane protein 26 (366 aa).

3 consecutive transmembrane segments (helical) span residues Leu4–Val24, Tyr36–Phe56, and Trp64–Glu84. Asn110 is a glycosylation site (N-linked (GlcNAc...) asparagine). Transmembrane regions (helical) follow at residues Met138–Ile158, Glu176–Leu196, Val208–Val228, Ile258–Ile278, and Val282–Phe302. Residues His319–Gly329 show a composition bias toward basic and acidic residues. A disordered region spans residues His319 to Pro366. Polar residues predominate over residues Ser354 to Pro366.

The protein localises to the membrane. This is Transmembrane protein 26 (Tmem26) from Mus musculus (Mouse).